The chain runs to 142 residues: Large ribosomal subunit protein uL13 (142 aa).

It belongs to the universal ribosomal protein uL13 family. As to quaternary structure, part of the 50S ribosomal subunit.

Its function is as follows. This protein is one of the early assembly proteins of the 50S ribosomal subunit, although it is not seen to bind rRNA by itself. It is important during the early stages of 50S assembly. The chain is Large ribosomal subunit protein uL13 from Histophilus somni (Haemophilus somnus).